Consider the following 254-residue polypeptide: 4-hydroxy-tetrahydrodipicolinate reductase (254 aa).

7 to 12 is an NAD(+) binding site; it reads GASGRI. R35 contacts NADP(+). NAD(+) is bound by residues 91–93 and 115–118; these read GTT and AHNM. The Proton donor/acceptor role is filled by H147. Residue H148 coordinates (S)-2,3,4,5-tetrahydrodipicolinate. The active-site Proton donor is K151. (S)-2,3,4,5-tetrahydrodipicolinate is bound at residue 157 to 158; sequence GT.

It belongs to the DapB family.

It localises to the cytoplasm. It catalyses the reaction (S)-2,3,4,5-tetrahydrodipicolinate + NAD(+) + H2O = (2S,4S)-4-hydroxy-2,3,4,5-tetrahydrodipicolinate + NADH + H(+). The enzyme catalyses (S)-2,3,4,5-tetrahydrodipicolinate + NADP(+) + H2O = (2S,4S)-4-hydroxy-2,3,4,5-tetrahydrodipicolinate + NADPH + H(+). The protein operates within amino-acid biosynthesis; L-lysine biosynthesis via DAP pathway; (S)-tetrahydrodipicolinate from L-aspartate: step 4/4. In terms of biological role, catalyzes the conversion of 4-hydroxy-tetrahydrodipicolinate (HTPA) to tetrahydrodipicolinate. This is 4-hydroxy-tetrahydrodipicolinate reductase from Helicobacter pylori (strain Shi470).